Reading from the N-terminus, the 263-residue chain is Transmembrane protein 176B (263 aa).

Transmembrane regions (helical) follow at residues Leu61–Phe81, Ala89–Ile109, Leu125–Ile145, and Leu197–Val217. The tract at residues Lys242–Pro263 is disordered. 2 positions are modified to phosphoserine: Ser249 and Ser253.

Belongs to the TMEM176 family. Expressed in spleen by a variety of myeloid cells including macrophages and dendritic cells (at protein level). Ubiquitously expressed with higher expression in lymphoid tissues.

Its subcellular location is the nucleus membrane. In terms of biological role, required for the development of cerebellar granule cells. May play a role in the process of maturation of dendritic cells. The polypeptide is Transmembrane protein 176B (Tmem176b) (Rattus norvegicus (Rat)).